Here is a 392-residue protein sequence, read N- to C-terminus: HORMA domain-containing protein 1 (392 aa).

One can recognise an HORMA domain in the interval histidine 25–valine 227. The segment at serine 323 to arginine 359 is disordered. A compositionally biased stretch (polar residues) spans lysine 341 to serine 353. Residue serine 375 is modified to Phosphoserine. The short motif at lysine 381–arginine 384 is the Nuclear localization signal element.

As to quaternary structure, interacts with HORMAD2. Interacts with IHO1. In terms of processing, phosphorylated at Ser-375 in a SPO11-dependent manner. In terms of tissue distribution, specifically expressed in meiotic germ cells.

It is found in the nucleus. The protein resides in the chromosome. It localises to the cytoplasm. Plays a key role in meiotic progression. Regulates 3 different functions during meiosis: ensures that sufficient numbers of processed DNA double-strand breaks (DSBs) are available for successful homology search by increasing the steady-state numbers of single-stranded DSB ends. Promotes synaptonemal-complex formation independently of its role in homology search. Plays a key role in the male mid-pachytene checkpoint and the female meiotic prophase checkpoint: required for efficient build-up of ATR activity on unsynapsed chromosome regions, a process believed to form the basis of meiotic silencing of unsynapsed chromatin (MSUC) and meiotic prophase quality control in both sexes. This is HORMA domain-containing protein 1 from Mus musculus (Mouse).